Here is a 241-residue protein sequence, read N- to C-terminus: Fatty acid metabolism regulator protein (241 aa).

The 69-residue stretch at 11 to 79 folds into the HTH gntR-type domain; the sequence is QSPAALAEEY…HGKPTKVNNI (69 aa). Positions 39–58 form a DNA-binding region, H-T-H motif; the sequence is ERDLADKIGVTRTTLREVLQ.

Homodimer.

It localises to the cytoplasm. Multifunctional regulator of fatty acid metabolism. The protein is Fatty acid metabolism regulator protein of Haemophilus influenzae (strain ATCC 51907 / DSM 11121 / KW20 / Rd).